The following is a 166-amino-acid chain: Large ribosomal subunit protein bL19 (166 aa).

The protein belongs to the bacterial ribosomal protein bL19 family. Part of the 50S ribosomal subunit. Forms a cluster with proteins L3 and L14.

Functionally, this protein is located at the 30S-50S ribosomal subunit interface and may play a role in the structure and function of the aminoacyl-tRNA binding site. Binds the 23S rRNA. The sequence is that of Large ribosomal subunit protein bL19 (rplS) from Deinococcus radiodurans (strain ATCC 13939 / DSM 20539 / JCM 16871 / CCUG 27074 / LMG 4051 / NBRC 15346 / NCIMB 9279 / VKM B-1422 / R1).